Reading from the N-terminus, the 93-residue chain is Small ribosomal subunit protein uS19 (93 aa).

It belongs to the universal ribosomal protein uS19 family.

Protein S19 forms a complex with S13 that binds strongly to the 16S ribosomal RNA. The sequence is that of Small ribosomal subunit protein uS19 from Campylobacter fetus subsp. fetus (strain 82-40).